A 143-amino-acid polypeptide reads, in one-letter code: Hemoglobin subunit alpha (143 aa).

Residue Ser2 is modified to N-acetylserine. The 142-residue stretch at 2–143 (SLSDKDKSAV…VALALAEKYR (142 aa)) folds into the Globin domain. His60 contributes to the O2 binding site. His89 contributes to the heme b binding site.

This sequence belongs to the globin family. In terms of assembly, heterotetramer of two alpha chains and two beta chains. In terms of tissue distribution, red blood cells.

Its function is as follows. Involved in oxygen transport from gills to the various peripheral tissues. The protein is Hemoglobin subunit alpha (hba) of Pogonophryne scotti (Saddleback plunderfish).